The chain runs to 396 residues: Elongation factor Tu (396 aa).

The region spanning 10 to 206 (KPHVNVGTIG…ALDTYIPTPE (197 aa)) is the tr-type G domain. Residues 19–26 (GHVDHGKT) are G1. GTP is bound at residue 19 to 26 (GHVDHGKT). Mg(2+) is bound at residue threonine 26. Residues 60–64 (GITIN) form a G2 region. Residues 81–84 (DCPG) are G3. GTP is bound by residues 81–85 (DCPGH) and 136–139 (NKAD). The G4 stretch occupies residues 136-139 (NKAD). Positions 174–176 (SAK) are G5.

It belongs to the TRAFAC class translation factor GTPase superfamily. Classic translation factor GTPase family. EF-Tu/EF-1A subfamily. Monomer.

It localises to the cytoplasm. It carries out the reaction GTP + H2O = GDP + phosphate + H(+). In terms of biological role, GTP hydrolase that promotes the GTP-dependent binding of aminoacyl-tRNA to the A-site of ribosomes during protein biosynthesis. The sequence is that of Elongation factor Tu from Janthinobacterium sp. (strain Marseille) (Minibacterium massiliensis).